The sequence spans 328 residues: Arabinose 5-phosphate isomerase KdsD (328 aa).

The region spanning 42 to 184 is the SIS domain; sequence CEKMFWCKGK…AVALLKARGF (143 aa). Residues 75-76, H82, H88, 114-123, 148-150, T222, and D275 each bind substrate; these read GT, ALIPVLKRLH, and KVA. H82 is a binding site for Zn(2+). Residues 210–268 form the CBS 1 domain; that stretch reads MHTGDEIPHVKKTASLRDALLEVTRKNLGMTVICDDNMMIEGIFTDGDLRRVFDMGVDV. Positions 277-328 constitute a CBS 2 domain; that stretch reads MTPGGIRVRPGILAVEALNLMQSRHITSVMVADGDHLLGVLHMHDLLRAGVV.

The protein belongs to the SIS family. GutQ/KpsF subfamily. In terms of assembly, homotetramer.

It carries out the reaction D-arabinose 5-phosphate = D-ribulose 5-phosphate. It participates in carbohydrate biosynthesis; 3-deoxy-D-manno-octulosonate biosynthesis; 3-deoxy-D-manno-octulosonate from D-ribulose 5-phosphate: step 1/3. It functions in the pathway bacterial outer membrane biogenesis; lipopolysaccharide biosynthesis. Functionally, involved in the biosynthesis of 3-deoxy-D-manno-octulosonate (KDO), a unique 8-carbon sugar component of lipopolysaccharides (LPSs). Catalyzes the reversible aldol-ketol isomerization between D-ribulose 5-phosphate (Ru5P) and D-arabinose 5-phosphate (A5P). This is Arabinose 5-phosphate isomerase KdsD (kdsD) from Escherichia coli O157:H7.